Consider the following 672-residue polypeptide: DNA ligase (672 aa).

NAD(+) is bound by residues 32-36, 81-82, and glutamate 113; these read DAEYD and SL. The active-site N6-AMP-lysine intermediate is the lysine 115. Residues arginine 136, glutamate 173, lysine 290, and lysine 314 each contribute to the NAD(+) site. Zn(2+)-binding residues include cysteine 408, cysteine 411, cysteine 426, and cysteine 432. A BRCT domain is found at 594-672; sequence EIDSPFAGKT…EAEMLRLLGE (79 aa).

It belongs to the NAD-dependent DNA ligase family. LigA subfamily. Mg(2+) serves as cofactor. It depends on Mn(2+) as a cofactor.

It carries out the reaction NAD(+) + (deoxyribonucleotide)n-3'-hydroxyl + 5'-phospho-(deoxyribonucleotide)m = (deoxyribonucleotide)n+m + AMP + beta-nicotinamide D-nucleotide.. In terms of biological role, DNA ligase that catalyzes the formation of phosphodiester linkages between 5'-phosphoryl and 3'-hydroxyl groups in double-stranded DNA using NAD as a coenzyme and as the energy source for the reaction. It is essential for DNA replication and repair of damaged DNA. This is DNA ligase from Cronobacter sakazakii (strain ATCC BAA-894) (Enterobacter sakazakii).